Consider the following 446-residue polypeptide: MNSQVLVSRPLAPQSVPAVSLPVQSAQVAQNTGPHSSSGLATAGFRTAKYLHEEWQQGNLTTFYQAFSDRDQSEKGRHESKQLVAETEARAQRSQADCTKSLGERLLDIHFWKSELSREIRDVGAETQLLVQQKVRLERALDATDIPFTIATDNLKCRDRRRGSELVRDDVEMQLLKEVDLIRNVQELLKRTLDQAAQQIRQNRDAKEALEMDYSDKAEAYEFDDKCGRYNNQSTDIQFHLNSSKYEDNTSTPESWAQYTHENIYKAERERMASINLRSLIDSILQDISEDLQAQFDAIAVDFEKRCRELEDAKQKLEMHLKKTLEEIGGQEKNIAALKQAINDKSPPLKVAQTRLHERSYRPNVELCRDHVQIRLVSEVGELTDSFDALKLKLEESEQSLRNLEDTRMSLEKDIANKANSIFIDREKCMTHRTRYPHGMKLLGYQ.

Coiled-coil stretches lie at residues 182-215 (IRNVQELLKRTLDQAAQQIRQNRDAKEALEMDYS), 297-346 (DAIA…NDKS), and 378-422 (SEVG…ANSI).

It belongs to the tektin family.

Its subcellular location is the cytoplasm. The protein resides in the cytoskeleton. The protein localises to the cilium axoneme. It is found in the cell projection. It localises to the cilium. Its subcellular location is the flagellum. Microtubule inner protein (MIP) part of the dynein-decorated doublet microtubules (DMTs) in cilia and flagellar axoneme. Forms filamentous polymers in the walls of ciliary and flagellar microtubules. Contributes to normal sperm motility. This is Tektin-4 (tekt4) from Xenopus laevis (African clawed frog).